The following is a 166-amino-acid chain: FMN reductase (NADH) RutF (166 aa).

Belongs to the non-flavoprotein flavin reductase family. RutF subfamily.

The enzyme catalyses FMNH2 + NAD(+) = FMN + NADH + 2 H(+). Catalyzes the reduction of FMN to FMNH2 which is used to reduce pyrimidine by RutA via the Rut pathway. The protein is FMN reductase (NADH) RutF of Cronobacter turicensis (strain DSM 18703 / CCUG 55852 / LMG 23827 / z3032).